The primary structure comprises 995 residues: DExH-box ATP-dependent RNA helicase DExH10 (995 aa).

The disordered stretch occupies residues 1–42 (MSAQMEEPETLGKRKESESSKLRSDETPTPEPRTKRRSLKRA). At S2 the chain carries N-acetylserine. Basic and acidic residues predominate over residues 10 to 26 (TLGKRKESESSKLRSDE). Residues 90–246 (VACLERKESI…WICYLHKQPC (157 aa)) enclose the Helicase ATP-binding domain. Residue 103–110 (AHTSAGKT) participates in ATP binding. The short motif at 194–197 (DEIH) is the DEIH box element. Positions 290–318 (DTFPKPKSNDGKKSANGKSGGRGAKGGGG) are disordered. The span at 307–318 (KSGGRGAKGGGG) shows a compositional bias: gly residues. Positions 323–524 (DVYKIVKMIM…LSYYTILNLL (202 aa)) constitute a Helicase C-terminal domain.

The protein belongs to the DExH box helicase family. SKI2 subfamily. Expressed in inflorescences, leaves, stems, and roots.

The protein localises to the nucleus. Its subcellular location is the nucleoplasm. The enzyme catalyses ATP + H2O = ADP + phosphate + H(+). Functionally, ATP-dependent RNA helicase that associates with the RNA exosome complex, with the cap binding complex (CBC) and with the NEXT-like complex. Involved in the degradation of a large number of non-coding nuclear exosome substrates such as snoRNA and miRNA precursors, incompletely spliced mRNAs, and spurious transcripts produced from pseudogenes and intergenic regions. Involved in the maintenance of homeotic B and C gene expression in the reproductive whorls. Regulates floral organ spacing and identity, probably through the regulation of protein synthesis or mRNA degradation. This chain is DExH-box ATP-dependent RNA helicase DExH10, found in Arabidopsis thaliana (Mouse-ear cress).